A 264-amino-acid polypeptide reads, in one-letter code: Thymidylate synthase (264 aa).

A dUMP-binding site is contributed by R21. Residue H51 participates in (6R)-5,10-methylene-5,6,7,8-tetrahydrofolate binding. Residue 126 to 127 participates in dUMP binding; sequence RR. The active-site Nucleophile is the C146. DUMP contacts are provided by residues 166–169, N177, and 207–209; these read RSAD and HIY. D169 is a (6R)-5,10-methylene-5,6,7,8-tetrahydrofolate binding site. Residue A263 coordinates (6R)-5,10-methylene-5,6,7,8-tetrahydrofolate.

This sequence belongs to the thymidylate synthase family. Bacterial-type ThyA subfamily. Homodimer.

It localises to the cytoplasm. It carries out the reaction dUMP + (6R)-5,10-methylene-5,6,7,8-tetrahydrofolate = 7,8-dihydrofolate + dTMP. Its pathway is pyrimidine metabolism; dTTP biosynthesis. Functionally, catalyzes the reductive methylation of 2'-deoxyuridine-5'-monophosphate (dUMP) to 2'-deoxythymidine-5'-monophosphate (dTMP) while utilizing 5,10-methylenetetrahydrofolate (mTHF) as the methyl donor and reductant in the reaction, yielding dihydrofolate (DHF) as a by-product. This enzymatic reaction provides an intracellular de novo source of dTMP, an essential precursor for DNA biosynthesis. The chain is Thymidylate synthase from Vesicomyosocius okutanii subsp. Calyptogena okutanii (strain HA).